Consider the following 428-residue polypeptide: MDSISSPSTSSSASSTPKLISEKCLVCFQPSHGNHFGVDSCRACAAFFRRVFVTHKQQFPCREGDNKCTPDEWGRWSCKRCRSDKCFALGMKPDNIQRDRDRFIFSDNFRDDRKRKTSESIVPLSVERFVGKQLVTTYTSTGSGKNIEYITFFDLTPIIKDADYILKRIPKLEKSVKVKSSLEQLAFGLQEVRKEQLFESVPELRKIGKMETWDNWVKGMRRAGEWIMHFEEFRQLEQEEKMVILKCMWHLFIRLERISMTAEMRRMKLCDDKEFIYGTEQRINYDTLEIDRDWFSEATDREVRSFIGPLPRWFCETIIDALMELRPSDVELSFMLCNLCFHLTGQKLGGRIQEITDRLQDVLANDLHKYYLAKDKYSRYSYRLTKLLSLNRQYKNDLEIRRQGIFLANTLNIFRVKLSHPEMFQFSC.

The segment at residues 21–98 (SEKCLVCFQP…LGMKPDNIQR (78 aa)) is a DNA-binding region (nuclear receptor). NR C4-type zinc fingers lie at residues 24–44 (CLVC…CRAC) and 61–86 (CREG…SDKC). The NR LBD domain maps to 181–427 (SLEQLAFGLQ…LSHPEMFQFS (247 aa)).

It belongs to the nuclear hormone receptor family.

The protein resides in the nucleus. Orphan nuclear receptor. The chain is Nuclear hormone receptor family member nhr-44 (nhr-44) from Caenorhabditis elegans.